A 270-amino-acid chain; its full sequence is Putative phosphoenolpyruvate synthase regulatory protein (270 aa).

149–156 is a binding site for ADP; that stretch reads GVSRSGKT.

The protein belongs to the pyruvate, phosphate/water dikinase regulatory protein family. PSRP subfamily.

It carries out the reaction [pyruvate, water dikinase] + ADP = [pyruvate, water dikinase]-phosphate + AMP + H(+). It catalyses the reaction [pyruvate, water dikinase]-phosphate + phosphate + H(+) = [pyruvate, water dikinase] + diphosphate. Its function is as follows. Bifunctional serine/threonine kinase and phosphorylase involved in the regulation of the phosphoenolpyruvate synthase (PEPS) by catalyzing its phosphorylation/dephosphorylation. The sequence is that of Putative phosphoenolpyruvate synthase regulatory protein from Alteromonas mediterranea (strain DSM 17117 / CIP 110805 / LMG 28347 / Deep ecotype).